The primary structure comprises 110 residues: Phosphoribosyl-ATP pyrophosphatase (110 aa).

This sequence belongs to the PRA-PH family.

It is found in the cytoplasm. The catalysed reaction is 1-(5-phospho-beta-D-ribosyl)-ATP + H2O = 1-(5-phospho-beta-D-ribosyl)-5'-AMP + diphosphate + H(+). The protein operates within amino-acid biosynthesis; L-histidine biosynthesis; L-histidine from 5-phospho-alpha-D-ribose 1-diphosphate: step 2/9. The chain is Phosphoribosyl-ATP pyrophosphatase from Stutzerimonas stutzeri (strain A1501) (Pseudomonas stutzeri).